A 337-amino-acid chain; its full sequence is Glyceraldehyde-3-phosphate dehydrogenase 3 (337 aa).

NAD(+)-binding positions include 12 to 13 and lysine 80; that span reads RM. D-glyceraldehyde 3-phosphate is bound by residues 152 to 154 and threonine 183; that span reads SCT. Cysteine 153 functions as the Nucleophile in the catalytic mechanism. Asparagine 184 lines the NAD(+) pocket. Residues arginine 198, 211 to 212, and arginine 234 each bind D-glyceraldehyde 3-phosphate; that span reads TG. Residue asparagine 317 participates in NAD(+) binding.

Belongs to the glyceraldehyde-3-phosphate dehydrogenase family. Homotetramer.

Its subcellular location is the cytoplasm. It catalyses the reaction D-glyceraldehyde 3-phosphate + phosphate + NAD(+) = (2R)-3-phospho-glyceroyl phosphate + NADH + H(+). It participates in carbohydrate degradation; glycolysis; pyruvate from D-glyceraldehyde 3-phosphate: step 1/5. It functions in the pathway carbohydrate biosynthesis; gluconeogenesis. Functionally, catalyzes the oxidative phosphorylation of glyceraldehyde 3-phosphate (G3P) to 1,3-bisphosphoglycerate (BPG) using the cofactor NAD. The first reaction step involves the formation of a hemiacetal intermediate between G3P and a cysteine residue, and this hemiacetal intermediate is then oxidized to a thioester, with concomitant reduction of NAD to NADH. The reduced NADH is then exchanged with the second NAD, and the thioester is attacked by a nucleophilic inorganic phosphate to produce BPG. The sequence is that of Glyceraldehyde-3-phosphate dehydrogenase 3 (gap3) from Nostoc sp. (strain PCC 7120 / SAG 25.82 / UTEX 2576).